The sequence spans 555 residues: Wee1-like protein kinase 2 (555 aa).

Residues 1-112 form a disordered region; that stretch reads MADTETDQGL…NFSTPKNSLG (112 aa). Ser-15 is subject to Phosphoserine; by CaMK2 and PKA. Residues 26–41 show a composition bias toward polar residues; the sequence is EGQMTAQDIGGAQSQK. Residues 57-72 are compositionally biased toward basic and acidic residues; the sequence is TRDELHTSLSRDKESP. Position 71 is a phosphoserine (Ser-71). Residues 102–112 are compositionally biased toward polar residues; it reads TNFSTPKNSLG. Residues 167-169 carry the Nuclear localization signal motif; that stretch reads KRK. Residues 208-485 enclose the Protein kinase domain; that stretch reads FFEIEKIGVG…ARSRILWPFL (278 aa). ATP is bound by residues 214-222 and Lys-237; that span reads IGVGEFGTV. A Nuclear export signal motif is present at residues 310–324; that stretch reads KLKDILLQISLGLKY. Asp-334 acts as the Proton acceptor in catalysis. Positions 339 and 375 each coordinate Mg(2+). The stretch at 488–514 forms a coiled coil; that stretch reads TDELQKQLNLEKSKTATLKRELKKARH.

This sequence belongs to the protein kinase superfamily. Ser/Thr protein kinase family. WEE1 subfamily. In terms of processing, phosphorylated by PKA at Ser-15 in vitro, leading to activate kinase activity. Phosphorylation at Ser-15 by CaMK2, leading to increase its activity and promote metaphase II exit during egg activation. As to expression, ovary-specific.

It is found in the cytoplasm. The protein resides in the nucleus. It catalyses the reaction L-tyrosyl-[protein] + ATP = O-phospho-L-tyrosyl-[protein] + ADP + H(+). Its function is as follows. Oocyte-specific protein tyrosine kinase that phosphorylates and inhibits CDK1 and acts as a key regulator of meiosis during both prophase I and metaphase II. Required to maintain meiotic arrest in oocytes during the germinal vesicle (GV) stage, a long period of quiescence at dictyate prophase I, by phosphorylating CDK1 at 'Tyr-15', leading to inhibit CDK1 activity and prevent meiotic reentry. Also required for metaphase II exit during egg activation by phosphorylating CDK1 at 'Tyr-15', to ensure exit from meiosis in oocytes and promote pronuclear formation. The chain is Wee1-like protein kinase 2 (Wee2) from Mus musculus (Mouse).